The chain runs to 736 residues: Polyribonucleotide nucleotidyltransferase (736 aa).

Positions 506 and 512 each coordinate Mg(2+). Residues 573-632 enclose the KH domain; that stretch reads PRLTTIQVPVDAIGLIIGKGGETIRSITEETGAEINIEDDGTVTIACSSVEGTHAALATI. An S1 motif domain is found at 642-717; sequence GTIYLGKVRD…GKTRFALSMR (76 aa).

It belongs to the polyribonucleotide nucleotidyltransferase family. It depends on Mg(2+) as a cofactor.

Its subcellular location is the cytoplasm. The enzyme catalyses RNA(n+1) + phosphate = RNA(n) + a ribonucleoside 5'-diphosphate. Involved in mRNA degradation. Catalyzes the phosphorolysis of single-stranded polyribonucleotides processively in the 3'- to 5'-direction. The chain is Polyribonucleotide nucleotidyltransferase from Chlorobium limicola (strain DSM 245 / NBRC 103803 / 6330).